The sequence spans 267 residues: Hydroxyethylthiazole kinase (267 aa).

Position 46 (Met-46) interacts with substrate. ATP contacts are provided by Arg-121 and Thr-167. Substrate is bound at residue Ala-194.

It belongs to the Thz kinase family. Mg(2+) serves as cofactor.

The enzyme catalyses 5-(2-hydroxyethyl)-4-methylthiazole + ATP = 4-methyl-5-(2-phosphooxyethyl)-thiazole + ADP + H(+). The protein operates within cofactor biosynthesis; thiamine diphosphate biosynthesis; 4-methyl-5-(2-phosphoethyl)-thiazole from 5-(2-hydroxyethyl)-4-methylthiazole: step 1/1. Catalyzes the phosphorylation of the hydroxyl group of 4-methyl-5-beta-hydroxyethylthiazole (THZ). The chain is Hydroxyethylthiazole kinase from Rhizobium leguminosarum bv. trifolii (strain WSM2304).